The sequence spans 204 residues: Probable GTP-binding protein EngB (204 aa).

The EngB-type G domain maps to 22–197 (GFPEIAFVGR…LAEFDNVLSI (176 aa)). GTP-binding positions include 30 to 37 (GRSNVGKS), 57 to 61 (GKTRQ), 75 to 78 (DLPG), 144 to 147 (NKVD), and 176 to 178 (FSA). Residues Ser-37 and Thr-59 each contribute to the Mg(2+) site.

It belongs to the TRAFAC class TrmE-Era-EngA-EngB-Septin-like GTPase superfamily. EngB GTPase family. The cofactor is Mg(2+).

Necessary for normal cell division and for the maintenance of normal septation. This is Probable GTP-binding protein EngB from Ruminiclostridium cellulolyticum (strain ATCC 35319 / DSM 5812 / JCM 6584 / H10) (Clostridium cellulolyticum).